The following is a 637-amino-acid chain: SCF-associated factor 1 (637 aa).

One can recognise an F-box domain in the interval 14–63 (GLSPDIVQATLPFLSSDDIKNLSQTNKYYNTLLDFDHSKILWHELFHKAF). Ser16 carries the post-translational modification Phosphoserine. Residues 109 to 202 (AKFYSWGYLK…GFSFQILTES (94 aa)) form an RCC1 1 repeat. The tract at residues 242–315 (YPRITSRSNG…RTTMPSMGPH (74 aa)) is disordered. The span at 244 to 260 (RITSRSNGSTVNTTGTF) shows a compositional bias: polar residues. Ser266 carries the phosphoserine modification. Over residues 289–305 (SGGAPAASPGGSHSGVP) the composition is skewed to low complexity. One copy of the RCC1 2 repeat lies at 565–635 (GHLYSWGIES…GWQTGALIIK (71 aa)).

Interacts with AAH1, SKP1 and CDC53. Component of the SCF(SAF1) complex containing CDC53, SKP1, HRT1 and SAF1.

The protein operates within protein modification; protein ubiquitination. Its function is as follows. Substrate recognition component of a SCF (SKP1-CUL1-F-box protein) E3 ubiquitin-protein ligase complex which mediates the ubiquitination and subsequent proteasomal degradation of target proteins. Targets AAH1 adenine deaminase for proteasome-dependent degradation upon entry into quiescence. Targets also URA7. The protein is SCF-associated factor 1 (SAF1) of Saccharomyces cerevisiae (strain ATCC 204508 / S288c) (Baker's yeast).